The primary structure comprises 465 residues: Botryococcus squalene synthase (465 aa).

NADP(+) contacts are provided by arginine 48 and arginine 73. Residues aspartate 76, glutamate 79, and aspartate 80 each coordinate Mg(2+). Arginine 215, lysine 315, and arginine 317 together coordinate NADP(+). 2 helical membrane-spanning segments follow: residues 395-415 (AIRL…FNLG) and 429-449 (ILDL…LLVL).

It belongs to the phytoene/squalene synthase family.

It localises to the membrane. It catalyses the reaction presqualene diphosphate + NADPH + H(+) = squalene + diphosphate + NADP(+). Its function is as follows. Produces squalene when coexpressed with SSL-1 and bisfarnesyl ether and a very small amount of squalene when incubated alone in the presence of NADPH. In Botryococcus braunii (Green alga), this protein is Botryococcus squalene synthase (SSL-2).